The following is a 212-amino-acid chain: Imidazole glycerol phosphate synthase subunit HisH (212 aa).

The region spanning 1–210 (MIAVINYGAG…VRWSEAVQPK (210 aa)) is the Glutamine amidotransferase type-1 domain. Catalysis depends on C79, which acts as the Nucleophile. Active-site residues include H185 and E187.

Heterodimer of HisH and HisF.

It localises to the cytoplasm. The catalysed reaction is 5-[(5-phospho-1-deoxy-D-ribulos-1-ylimino)methylamino]-1-(5-phospho-beta-D-ribosyl)imidazole-4-carboxamide + L-glutamine = D-erythro-1-(imidazol-4-yl)glycerol 3-phosphate + 5-amino-1-(5-phospho-beta-D-ribosyl)imidazole-4-carboxamide + L-glutamate + H(+). The enzyme catalyses L-glutamine + H2O = L-glutamate + NH4(+). It participates in amino-acid biosynthesis; L-histidine biosynthesis; L-histidine from 5-phospho-alpha-D-ribose 1-diphosphate: step 5/9. Functionally, IGPS catalyzes the conversion of PRFAR and glutamine to IGP, AICAR and glutamate. The HisH subunit catalyzes the hydrolysis of glutamine to glutamate and ammonia as part of the synthesis of IGP and AICAR. The resulting ammonia molecule is channeled to the active site of HisF. The chain is Imidazole glycerol phosphate synthase subunit HisH from Chloroflexus aurantiacus (strain ATCC 29364 / DSM 637 / Y-400-fl).